Consider the following 881-residue polypeptide: Alanine--tRNA ligase (881 aa).

Histidine 564, histidine 568, cysteine 673, and histidine 677 together coordinate Zn(2+). Residues 848 to 867 (GQGGGGRPDMAQAGGPDGDK) are disordered.

It belongs to the class-II aminoacyl-tRNA synthetase family. The cofactor is Zn(2+).

It localises to the cytoplasm. It carries out the reaction tRNA(Ala) + L-alanine + ATP = L-alanyl-tRNA(Ala) + AMP + diphosphate. Functionally, catalyzes the attachment of alanine to tRNA(Ala) in a two-step reaction: alanine is first activated by ATP to form Ala-AMP and then transferred to the acceptor end of tRNA(Ala). Also edits incorrectly charged Ser-tRNA(Ala) and Gly-tRNA(Ala) via its editing domain. In Hyphomonas neptunium (strain ATCC 15444), this protein is Alanine--tRNA ligase.